A 416-amino-acid chain; its full sequence is CinA-like protein (416 aa).

It belongs to the CinA family.

This chain is CinA-like protein, found in Nostoc punctiforme (strain ATCC 29133 / PCC 73102).